The following is a 465-amino-acid chain: ATP synthase subunit beta (465 aa).

149–156 (GGAGVGKT) serves as a coordination point for ATP.

The protein belongs to the ATPase alpha/beta chains family. In terms of assembly, F-type ATPases have 2 components, CF(1) - the catalytic core - and CF(0) - the membrane proton channel. CF(1) has five subunits: alpha(3), beta(3), gamma(1), delta(1), epsilon(1). CF(0) has three main subunits: a(1), b(2) and c(9-12). The alpha and beta chains form an alternating ring which encloses part of the gamma chain. CF(1) is attached to CF(0) by a central stalk formed by the gamma and epsilon chains, while a peripheral stalk is formed by the delta and b chains.

Its subcellular location is the cell inner membrane. It catalyses the reaction ATP + H2O + 4 H(+)(in) = ADP + phosphate + 5 H(+)(out). Functionally, produces ATP from ADP in the presence of a proton gradient across the membrane. The catalytic sites are hosted primarily by the beta subunits. The polypeptide is ATP synthase subunit beta (Dictyoglomus thermophilum (strain ATCC 35947 / DSM 3960 / H-6-12)).